Reading from the N-terminus, the 86-residue chain is Weak neurotoxin 10 (86 aa).

An N-terminal signal peptide occupies residues 1-21; that stretch reads MKTLLLTLVVVTIVCLDLGYT. 5 disulfide bridges follow: cysteine 24–cysteine 45, cysteine 27–cysteine 32, cysteine 38–cysteine 63, cysteine 67–cysteine 78, and cysteine 79–cysteine 84.

The protein belongs to the three-finger toxin family. Ancestral subfamily. Orphan group II sub-subfamily. As to expression, expressed by the venom gland.

Its subcellular location is the secreted. Binds with low affinity to muscular (alpha-1-beta-1-delta-epsilon/CHRNA1-CHRNB1-CHRND-CHRNE) and very low affinity to neuronal (alpha-7/CHRNA7) nicotinic acetylcholine receptor (nAChR). This is Weak neurotoxin 10 (WNTX10) from Naja sputatrix (Malayan spitting cobra).